Reading from the N-terminus, the 395-residue chain is Ribosomal RNA large subunit methyltransferase I (395 aa).

One can recognise a PUA domain in the interval 2–79 (SSRVTLHPGR…QNESVDNGFF (78 aa)).

Belongs to the methyltransferase superfamily. RlmI family.

The protein localises to the cytoplasm. The catalysed reaction is cytidine(1962) in 23S rRNA + S-adenosyl-L-methionine = 5-methylcytidine(1962) in 23S rRNA + S-adenosyl-L-homocysteine + H(+). Specifically methylates the cytosine at position 1962 (m5C1962) of 23S rRNA. The protein is Ribosomal RNA large subunit methyltransferase I of Pseudoalteromonas atlantica (strain T6c / ATCC BAA-1087).